The chain runs to 378 residues: Ribosomal RNA large subunit methyltransferase G (378 aa).

This sequence belongs to the methyltransferase superfamily. RlmG family.

The protein resides in the cytoplasm. The enzyme catalyses guanosine(1835) in 23S rRNA + S-adenosyl-L-methionine = N(2)-methylguanosine(1835) in 23S rRNA + S-adenosyl-L-homocysteine + H(+). Functionally, specifically methylates the guanine in position 1835 (m2G1835) of 23S rRNA. This is Ribosomal RNA large subunit methyltransferase G from Salmonella newport (strain SL254).